Here is a 476-residue protein sequence, read N- to C-terminus: Angiotensinogen (476 aa).

A signal peptide spans 1 to 24 (MAPAGMSLRATILCLLAWAGLAAG). N-linked (GlcNAc...) asparagine glycosylation is found at asparagine 38, asparagine 161, asparagine 295, and asparagine 319. The cysteines at positions 42 and 162 are disulfide-linked.

The protein belongs to the serpin family. In response to low blood pressure, the enzyme renin/REN cleaves angiotensinogen to produce angiotensin-1. Angiotensin-1 is a substrate of ACE (angiotensin converting enzyme) that removes a dipeptide to yield the physiologically active peptide angiotensin-2. Angiotensin-1 and angiotensin-2 can be further processed to generate angiotensin-3, angiotensin-4. Angiotensin 1-9 is cleaved from angiotensin-1 by ACE2 and can be further processed by ACE to produce angiotensin 1-7, angiotensin 1-5 and angiotensin 1-4. Angiotensin 1-7 has also been proposed to be cleaved from angiotensin-2 by ACE2 or from angiotensin-1 by MME (neprilysin). In terms of processing, the disulfide bond is labile. Angiotensinogen is present in the circulation in a near 40:60 ratio with the oxidized disulfide-bonded form, which preferentially interacts with receptor-bound renin.

Its subcellular location is the secreted. Essential component of the renin-angiotensin system (RAS), a potent regulator of blood pressure, body fluid and electrolyte homeostasis. Functionally, acts directly on vascular smooth muscle as a potent vasoconstrictor, affects cardiac contractility and heart rate through its action on the sympathetic nervous system, and alters renal sodium and water absorption through its ability to stimulate the zona glomerulosa cells of the adrenal cortex to synthesize and secrete aldosterone. Acts by binding to angiotensin receptors AGTR1 and AGTR2. Also binds the DEAR/FBXW7-AS1 receptor. In terms of biological role, stimulates aldosterone release. Its function is as follows. Is a ligand for the G-protein coupled receptor MAS1. Has vasodilator and antidiuretic effects. Has an antithrombotic effect that involves MAS1-mediated release of nitric oxide from platelets. The chain is Angiotensinogen (AGT) from Gorilla gorilla gorilla (Western lowland gorilla).